The sequence spans 481 residues: MALSYRVSELQSTIPEHILQSTFVHVISSNWSGLQTESIPEEMKQIVEEQGNKLHWAALLILMVIIPTIGGNTLVILAVSLEKKLQYATNYFLMSLAVADLLVGLFVMPIALLTIMFEAMWPLPLVLCPAWLFLDVLFSTASIMHLCAISVDRYIAIKKPIQANQYNSRATAFIKITVVWLISIGIAIPVPIKGIETDVDNPNNITCVLTKERFGDFMLFGSLAAFFTPLAIMIVTYFLTIHALQKKAYLVKNKPPQRLTWLTVSTVFQRDETPCSSPEKVAMLDGSRKDKALPNSGDETLMRRTSTIGKKSVQTISNEQRASKVLGIVFFLFLLMWCPFFITNITLVLCDSCNQTTLQMLLEIFVWIGYVSSGVNPLVYTLFNKTFRDAFGRYITCNYRATKSVKTLRKRSSKIYFRNPMAENSKFFKKHGIRNGINPAMYQSPMRLRSSTIQSSSIILLDTLLLTENEGDKTEEQVSYV.

At 1 to 56 (MALSYRVSELQSTIPEHILQSTFVHVISSNWSGLQTESIPEEMKQIVEEQGNKLHW) the chain is on the extracellular side. Asn30 carries an N-linked (GlcNAc...) asparagine glycan. The chain crosses the membrane as a helical span at residues 57 to 79 (AALLILMVIIPTIGGNTLVILAV). The Cytoplasmic portion of the chain corresponds to 80 to 90 (SLEKKLQYATN). Residues 91–113 (YFLMSLAVADLLVGLFVMPIALL) form a helical membrane-spanning segment. Over 114–129 (TIMFEAMWPLPLVLCP) the chain is Extracellular. Cysteines 128 and 207 form a disulfide. Residues 130–151 (AWLFLDVLFSTASIMHLCAISV) form a helical membrane-spanning segment. Residues Asp135 and Thr140 each contribute to the ergotamine site. Positions 152 to 154 (DRY) match the DRY motif; important for ligand-induced conformation changes motif. At 152-171 (DRYIAIKKPIQANQYNSRAT) the chain is on the cytoplasmic side. Residues 172 to 192 (AFIKITVVWLISIGIAIPVPI) form a helical membrane-spanning segment. Over 193–216 (KGIETDVDNPNNITCVLTKERFGD) the chain is Extracellular. Leu209 serves as a coordination point for ergotamine. The [DE]RFG motif; may stabilize a conformation that preferentially activates signaling via beta-arrestin family members signature appears at 212 to 215 (ERFG). A helical membrane pass occupies residues 217-239 (FMLFGSLAAFFTPLAIMIVTYFL). The Cytoplasmic portion of the chain corresponds to 240 to 324 (TIHALQKKAY…TISNEQRASK (85 aa)). A helical membrane pass occupies residues 325–345 (VLGIVFFLFLLMWCPFFITNI). The Extracellular segment spans residues 346 to 360 (TLVLCDSCNQTTLQM). A disulfide bridge links Cys350 with Cys353. A helical transmembrane segment spans residues 361–382 (LLEIFVWIGYVSSGVNPLVYTL). The NPxxY motif; important for ligand-induced conformation changes and signaling motif lies at 376–380 (NPLVY). The Cytoplasmic portion of the chain corresponds to 383–481 (FNKTFRDAFG…DKTEEQVSYV (99 aa)). Cys397 is lipidated: S-palmitoyl cysteine. The PDZ-binding signature appears at 479–481 (SYV).

Belongs to the G-protein coupled receptor 1 family. As to quaternary structure, interacts (via C-terminus) with MPDZ. In terms of tissue distribution, ubiquitous. Detected in liver, kidney, heart, pulmonary artery, and intestine. Detected at lower levels in blood, placenta and brain, especially in cerebellum, occipital cortex and frontal cortex.

It is found in the cell membrane. It localises to the synapse. Its subcellular location is the synaptosome. Functionally, G-protein coupled receptor for 5-hydroxytryptamine (serotonin). Also functions as a receptor for various ergot alkaloid derivatives and psychoactive substances. Ligand binding causes a conformation change that triggers signaling via guanine nucleotide-binding proteins (G proteins) and modulates the activity of downstream effectors. HTR2B is coupled to G(q)/G(11) G alpha proteins and activates phospholipase C-beta, releasing diacylglycerol (DAG) and inositol 1,4,5-trisphosphate (IP3) second messengers that modulate the activity of phosphatidylinositol 3-kinase and promote the release of Ca(2+) ions from intracellular stores, respectively. Beta-arrestin family members inhibit signaling via G proteins and mediate activation of alternative signaling pathways. Plays a role in the regulation of dopamine and 5-hydroxytryptamine release, 5-hydroxytryptamine uptake and in the regulation of extracellular dopamine and 5-hydroxytryptamine levels, and thereby affects neural activity. May play a role in the perception of pain. Plays a role in the regulation of behavior, including impulsive behavior. Required for normal proliferation of embryonic cardiac myocytes and normal heart development. Protects cardiomyocytes against apoptosis. Plays a role in the adaptation of pulmonary arteries to chronic hypoxia. Plays a role in vasoconstriction. Required for normal osteoblast function and proliferation, and for maintaining normal bone density. Required for normal proliferation of the interstitial cells of Cajal in the intestine. The sequence is that of 5-hydroxytryptamine receptor 2B from Homo sapiens (Human).